The chain runs to 382 residues: Queuine tRNA-ribosyltransferase (382 aa).

The active-site Proton acceptor is Asp-93. Substrate-binding positions include 93–97, Asp-147, Gln-191, and Gly-218; that span reads DSGGF. An RNA binding region spans residues 249 to 255; the sequence is GVGKPED. The Nucleophile role is filled by Asp-268. The segment at 273–277 is RNA binding; important for wobble base 34 recognition; that stretch reads TRNAR. Residues Cys-306, Cys-308, Cys-311, and His-337 each contribute to the Zn(2+) site.

It belongs to the queuine tRNA-ribosyltransferase family. In terms of assembly, homodimer. Within each dimer, one monomer is responsible for RNA recognition and catalysis, while the other monomer binds to the replacement base PreQ1. It depends on Zn(2+) as a cofactor.

The catalysed reaction is 7-aminomethyl-7-carbaguanine + guanosine(34) in tRNA = 7-aminomethyl-7-carbaguanosine(34) in tRNA + guanine. The protein operates within tRNA modification; tRNA-queuosine biosynthesis. In terms of biological role, catalyzes the base-exchange of a guanine (G) residue with the queuine precursor 7-aminomethyl-7-deazaguanine (PreQ1) at position 34 (anticodon wobble position) in tRNAs with GU(N) anticodons (tRNA-Asp, -Asn, -His and -Tyr). Catalysis occurs through a double-displacement mechanism. The nucleophile active site attacks the C1' of nucleotide 34 to detach the guanine base from the RNA, forming a covalent enzyme-RNA intermediate. The proton acceptor active site deprotonates the incoming PreQ1, allowing a nucleophilic attack on the C1' of the ribose to form the product. After dissociation, two additional enzymatic reactions on the tRNA convert PreQ1 to queuine (Q), resulting in the hypermodified nucleoside queuosine (7-(((4,5-cis-dihydroxy-2-cyclopenten-1-yl)amino)methyl)-7-deazaguanosine). The protein is Queuine tRNA-ribosyltransferase of Haemophilus influenzae (strain 86-028NP).